Here is a 313-residue protein sequence, read N- to C-terminus: Protein OPG185 (313 aa).

The N-terminal stretch at 1–16 is a signal peptide; it reads MTRLSILLLLISLVYS. The Virion surface segment spans residues 17–277; the sequence is TPYPQTQISK…GKYSTKDYVK (261 aa). The 104-residue stretch at 18 to 121 folds into the Ig-like V-type domain; that stretch reads PYPQTQISKK…TTNDTDKVDY (104 aa). The cysteines at positions 36 and 105 are disulfide-linked. Residues Asn71, Asn114, Asn163, Asn182, and Asn262 are each glycosylated (N-linked (GlcNAc...) asparagine; by host). A helical transmembrane segment spans residues 278–301; it reads VFGIAALIILSAVAIFCITYYICN. The Intravirion segment spans residues 302-313; that stretch reads KRSRKYKTENKV.

This sequence belongs to the orthopoxvirus OPG185 family. As to quaternary structure, heterodimerizes with OPG040. The heterodimer OPG185-OPG040 interacts with components of the entry fusion complex OPG143 and OPG094. Heterodimer with C3/VPC protein; disulfide-linked. Glycosylated; contains phosphate and sulfate-substituted glycans. O-glycosylation is required for hemagglutination and hemadsorption activities of infected cell membranes.

It localises to the virion membrane. It is found in the host membrane. In terms of biological role, prevents cell to cell fusion by interacting with and directing the viral OPG040 protein on the host plasma membrane. The OPG185-OPG040 complex associates with components of the entry fusion complex (EFC) presumably to avoid superinfection and syncytium formation. Via its interaction with C3/VCP protein, protects the infected cell and probably also the extracellular enveloped virus from complement attack. This chain is Protein OPG185 (OPG185), found in Homo sapiens (Human).